Here is a 127-residue protein sequence, read N- to C-terminus: Gamma-synuclein (127 aa).

2 consecutive repeat copies span residues 20–30 and 31–41. The interval 20–67 is 4 X 11 AA tandem repeats of [EGSA]-K-T-K-[EQ]-[GQ]-V-X(4); it reads EKTKQGVTEAAEKTKEGVMYVGAKTKEGVVQSVTSVAEKTKEQANAVS. The stretch at 42-56 is one 3; approximate repeat; sequence AKTKEGVVQSVTSVA. Repeat unit 4 spans residues 57–67; it reads EKTKEQANAVS. A phosphoserine mark is found at serine 67, serine 72, and serine 124. Residues 99–127 form a disordered region; it reads ALKQPVPSQEDEAAKAEEQVAEETKSGGD. Residues 110–127 are compositionally biased toward basic and acidic residues; the sequence is EAAKAEEQVAEETKSGGD.

It belongs to the synuclein family. As to quaternary structure, may be a centrosome-associated protein. Interacts with MYOC; affects its secretion and its aggregation. In terms of processing, phosphorylated by BARK1 and GRK5. As to expression, predominantly expressed in retina (predominantly in outer nuclear layer, also in inner segment of photoreceptor cells, some individual cells located in the inner nuclear layer, inner plexiform layer and in nerve fiber layer). Also found in brain and heart.

The protein resides in the cytoplasm. It is found in the perinuclear region. The protein localises to the cytoskeleton. Its subcellular location is the microtubule organizing center. It localises to the centrosome. The protein resides in the spindle. In terms of biological role, plays a role in neurofilament network integrity. May be involved in modulating axonal architecture during development and in the adult. In vitro, increases the susceptibility of neurofilament-H to calcium-dependent proteases. May also function in modulating the keratin network in skin. Activates the MAPK and Elk-1 signal transduction pathway. The sequence is that of Gamma-synuclein (SNCG) from Bos taurus (Bovine).